A 256-amino-acid chain; its full sequence is Probable transcriptional regulatory protein cce_0894 (256 aa).

The protein belongs to the TACO1 family.

It localises to the cytoplasm. The sequence is that of Probable transcriptional regulatory protein cce_0894 from Crocosphaera subtropica (strain ATCC 51142 / BH68) (Cyanothece sp. (strain ATCC 51142)).